Here is a 600-residue protein sequence, read N- to C-terminus: Elongation factor 4 (600 aa).

Residues 7–189 enclose the tr-type G domain; sequence SLIRNFSIIA…ALVQRLPAPT (183 aa). Residues 19–24 and 136–139 contribute to the GTP site; these read DHGKST and NKID.

It belongs to the TRAFAC class translation factor GTPase superfamily. Classic translation factor GTPase family. LepA subfamily.

The protein resides in the cell inner membrane. The enzyme catalyses GTP + H2O = GDP + phosphate + H(+). Its function is as follows. Required for accurate and efficient protein synthesis under certain stress conditions. May act as a fidelity factor of the translation reaction, by catalyzing a one-codon backward translocation of tRNAs on improperly translocated ribosomes. Back-translocation proceeds from a post-translocation (POST) complex to a pre-translocation (PRE) complex, thus giving elongation factor G a second chance to translocate the tRNAs correctly. Binds to ribosomes in a GTP-dependent manner. This Gluconobacter oxydans (strain 621H) (Gluconobacter suboxydans) protein is Elongation factor 4.